The primary structure comprises 469 residues: Ribulose bisphosphate carboxylase large chain (469 aa).

The residue at position 5 (Lys5) is an N6,N6,N6-trimethyllysine. Substrate is bound by residues Asn114 and Thr164. The active-site Proton acceptor is Lys166. Lys168 serves as a coordination point for substrate. Mg(2+)-binding residues include Lys192, Asp194, and Glu195. The residue at position 192 (Lys192) is an N6-carboxylysine. His285 acts as the Proton acceptor in catalysis. 3 residues coordinate substrate: Arg286, His318, and Ser370.

It belongs to the RuBisCO large chain family. Type I subfamily. In terms of assembly, heterohexadecamer of 8 large chains and 8 small chains; disulfide-linked. The disulfide link is formed within the large subunit homodimers. It depends on Mg(2+) as a cofactor. Post-translationally, the disulfide bond which can form in the large chain dimeric partners within the hexadecamer appears to be associated with oxidative stress and protein turnover.

It is found in the plastid. Its subcellular location is the chloroplast. It carries out the reaction 2 (2R)-3-phosphoglycerate + 2 H(+) = D-ribulose 1,5-bisphosphate + CO2 + H2O. The enzyme catalyses D-ribulose 1,5-bisphosphate + O2 = 2-phosphoglycolate + (2R)-3-phosphoglycerate + 2 H(+). In terms of biological role, ruBisCO catalyzes two reactions: the carboxylation of D-ribulose 1,5-bisphosphate, the primary event in carbon dioxide fixation, as well as the oxidative fragmentation of the pentose substrate in the photorespiration process. Both reactions occur simultaneously and in competition at the same active site. The sequence is that of Ribulose bisphosphate carboxylase large chain from Calycophyllum candidissimum (Degame lemonwood tree).